Reading from the N-terminus, the 84-residue chain is Acetylcholine receptor subunit alpha (84 aa).

Cysteines 7 and 21 form a disulfide. N-linked (GlcNAc...) asparagine glycans are attached at residues asparagine 20 and asparagine 66. A disulfide bridge links cysteine 71 with cysteine 72.

It belongs to the ligand-gated ion channel (TC 1.A.9) family. Acetylcholine receptor (TC 1.A.9.1) subfamily. Alpha-1/CHRNA1 sub-subfamily. In terms of assembly, one of the alpha chains that assemble within the acetylcholine receptor, a pentamer of two alpha chains, a beta, a delta, and a gamma (in immature muscle) or epsilon (in mature muscle) chains. The muscle heteropentamer composed of alpha-1, beta-1, delta, epsilon subunits interacts with the alpha-conotoxin ImII.

Its subcellular location is the postsynaptic cell membrane. It localises to the cell membrane. It carries out the reaction K(+)(in) = K(+)(out). The catalysed reaction is Na(+)(in) = Na(+)(out). Its function is as follows. Upon acetylcholine binding, the AChR responds by an extensive change in conformation that affects all subunits and leads to opening of an ion-conducting channel across the plasma membrane. The sequence is that of Acetylcholine receptor subunit alpha (CHRNA1) from Herpestes ichneumon (Egyptian mongoose).